A 153-amino-acid chain; its full sequence is HTH-type transcriptional regulator Zrp (153 aa).

The 62-residue stretch at 2–63 (IDYRDRHILS…LLDRKKINLP (62 aa)) folds into the HTH asnC-type domain. A DNA-binding region (H-T-H motif) is located at residues 21-40 (LAEIAERVALSVSACSRRVA).

The protein is HTH-type transcriptional regulator Zrp (zrp) of Zymomonas mobilis subsp. mobilis (strain ATCC 10988 / DSM 424 / LMG 404 / NCIMB 8938 / NRRL B-806 / ZM1).